The chain runs to 488 residues: 3-octaprenyl-4-hydroxybenzoate carboxy-lyase (488 aa).

Asn-172 lines the Mn(2+) pocket. Residues Ile-175–Arg-177, Arg-189–Leu-191, and Arg-194–Gly-195 each bind prenylated FMN. Glu-238 contributes to the Mn(2+) binding site. Asp-287 serves as the catalytic Proton donor.

Belongs to the UbiD family. Homohexamer. It depends on prenylated FMN as a cofactor. Mn(2+) is required as a cofactor.

It is found in the cell membrane. It catalyses the reaction a 4-hydroxy-3-(all-trans-polyprenyl)benzoate + H(+) = a 2-(all-trans-polyprenyl)phenol + CO2. It participates in cofactor biosynthesis; ubiquinone biosynthesis. Functionally, catalyzes the decarboxylation of 3-octaprenyl-4-hydroxy benzoate to 2-octaprenylphenol, an intermediate step in ubiquinone biosynthesis. This chain is 3-octaprenyl-4-hydroxybenzoate carboxy-lyase, found in Pseudomonas syringae pv. tomato (strain ATCC BAA-871 / DC3000).